We begin with the raw amino-acid sequence, 475 residues long: Methylenomycin A resistance protein (475 aa).

14 helical membrane-spanning segments follow: residues I28 to A48, W65 to A85, V93 to T113, V123 to F143, M152 to G172, L173 to I193, L212 to I232, T240 to L260, L285 to F305, F314 to Y334, L346 to A366, W371 to M391, Q416 to W436, and G439 to W459.

This sequence belongs to the major facilitator superfamily.

Its subcellular location is the cell membrane. Functionally, resistance to the epoxide antibiotic methylenomycin A; probably by mediating its efflux. This Streptomyces coelicolor (strain ATCC BAA-471 / A3(2) / M145) protein is Methylenomycin A resistance protein (mmr).